Reading from the N-terminus, the 282-residue chain is Small-conductance mechanosensitive channel (282 aa).

The Periplasmic segment spans residues M1–D23. Residues V24 to Y46 traverse the membrane as a helical segment. The Cytoplasmic segment spans residues K47 to S66. The helical transmembrane segment at L67–L87 threads the bilayer. Residues F88–N89 lie on the Periplasmic side of the membrane. A helical membrane pass occupies residues I90 to A110. Over Q111–N282 the chain is Cytoplasmic.

This sequence belongs to the MscS (TC 1.A.23) family. Homoheptamer.

Its subcellular location is the cell inner membrane. Mechanosensitive ion channel that participates in the regulation of osmotic pressure changes within the cell, opening in response to stretch forces in the membrane lipid bilayer, without the need for other proteins. Has high selectivity for anions, and may contribute to resistance to hypoosmotic shock. This chain is Small-conductance mechanosensitive channel, found in Caldanaerobacter subterraneus subsp. tengcongensis (strain DSM 15242 / JCM 11007 / NBRC 100824 / MB4) (Thermoanaerobacter tengcongensis).